A 265-amino-acid polypeptide reads, in one-letter code: NAD kinase 1 (265 aa).

Catalysis depends on Asp45, which acts as the Proton acceptor. Residues 45–46 (DG), 122–123 (NE), Arg148, Asp150, and Ala185 contribute to the NAD(+) site.

This sequence belongs to the NAD kinase family. Requires a divalent metal cation as cofactor.

The protein resides in the cytoplasm. The catalysed reaction is NAD(+) + ATP = ADP + NADP(+) + H(+). Its function is as follows. Involved in the regulation of the intracellular balance of NAD and NADP, and is a key enzyme in the biosynthesis of NADP. Catalyzes specifically the phosphorylation on 2'-hydroxyl of the adenosine moiety of NAD to yield NADP. This is NAD kinase 1 from Bacillus anthracis.